We begin with the raw amino-acid sequence, 342 residues long: Tetraacyldisaccharide 4'-kinase (342 aa).

68 to 75 (TVGGTGKT) contacts ATP.

The protein belongs to the LpxK family.

The catalysed reaction is a lipid A disaccharide + ATP = a lipid IVA + ADP + H(+). It functions in the pathway glycolipid biosynthesis; lipid IV(A) biosynthesis; lipid IV(A) from (3R)-3-hydroxytetradecanoyl-[acyl-carrier-protein] and UDP-N-acetyl-alpha-D-glucosamine: step 6/6. In terms of biological role, transfers the gamma-phosphate of ATP to the 4'-position of a tetraacyldisaccharide 1-phosphate intermediate (termed DS-1-P) to form tetraacyldisaccharide 1,4'-bis-phosphate (lipid IVA). The chain is Tetraacyldisaccharide 4'-kinase from Burkholderia thailandensis (strain ATCC 700388 / DSM 13276 / CCUG 48851 / CIP 106301 / E264).